Consider the following 347-residue polypeptide: Cell division protein FtsQ (347 aa).

The interval 1 to 55 is disordered; it reads MARNGNPQFPDERSTATRAKATEPEELDDRFSDLEPEEDSPFLRSQKRVPVRRGP. At 1–66 the chain is on the cytoplasmic side; the sequence is MARNGNPQFP…PSKKAANRVK (66 aa). A compositionally biased stretch (basic and acidic residues) spans 10–33; sequence PDERSTATRAKATEPEELDDRFSD. The chain crosses the membrane as a helical span at residues 67–87; it reads IALIVLGVLVVIGGVWMALSA. Residues 88-347 are Periplasmic-facing; sequence YGEHSWRFRL…PTAHTSGRRH (260 aa). Positions 98-166 constitute a POTRA domain; the sequence is ESSDSIEVGG…DRIRVQVTER (69 aa). Positions 308 to 347 are disordered; it reads DSHPSAAKPTAPAVAPAVEKPAVAKPAVAKPTAHTSGRRH. The span at 313–340 shows a compositional bias: low complexity; it reads AAKPTAPAVAPAVEKPAVAKPAVAKPTA.

The protein belongs to the FtsQ/DivIB family. FtsQ subfamily.

The protein localises to the cell inner membrane. Essential cell division protein. This is Cell division protein FtsQ from Koribacter versatilis (strain Ellin345).